We begin with the raw amino-acid sequence, 613 residues long: Arginine--tRNA ligase (613 aa).

A 'HIGH' region motif is present at residues 123–133 (PNVAKPMHVGH).

Belongs to the class-I aminoacyl-tRNA synthetase family. Monomer.

It is found in the cytoplasm. It carries out the reaction tRNA(Arg) + L-arginine + ATP = L-arginyl-tRNA(Arg) + AMP + diphosphate. The protein is Arginine--tRNA ligase of Caulobacter sp. (strain K31).